The sequence spans 328 residues: dITP/XTP pyrophosphatase (328 aa).

The tract at residues 1–129 (MSEKIYEYKD…ATSEQGFGDT (129 aa)) is unknown. Positions 130-324 (ILIATRNEGK…KLMEVFPAWQ (195 aa)) are NTP pyrophosphatase. Residue 134–139 (TRNEGK) coordinates substrate. Residue aspartate 196 is the Proton acceptor of the active site. Aspartate 196 is a binding site for Mg(2+). Residues serine 197, 280-283 (FGYD), lysine 303, and 308-309 (HR) contribute to the substrate site.

Belongs to the HAM1 NTPase family. As to quaternary structure, homodimer. The cofactor is Mg(2+).

It carries out the reaction XTP + H2O = XMP + diphosphate + H(+). The enzyme catalyses dITP + H2O = dIMP + diphosphate + H(+). It catalyses the reaction ITP + H2O = IMP + diphosphate + H(+). Its function is as follows. Pyrophosphatase that catalyzes the hydrolysis of nucleoside triphosphates to their monophosphate derivatives, with a high preference for the non-canonical purine nucleotides XTP (xanthosine triphosphate), dITP (deoxyinosine triphosphate) and ITP. Seems to function as a house-cleaning enzyme that removes non-canonical purine nucleotides from the nucleotide pool, thus preventing their incorporation into DNA/RNA and avoiding chromosomal lesions. In Streptococcus pyogenes serotype M18 (strain MGAS8232), this protein is dITP/XTP pyrophosphatase.